Reading from the N-terminus, the 218-residue chain is MSSGAASGTGRGRPRGGGPGPGDPPPSETHKLVVVGGGGVGKSALTIQFIQSYFVSDYDPTIEDSYTKICSVDGIPARLDILDTAGQEEFGAMREQYMRAGHGFLLVFAINDRQSFNEVGKLFTQILRVKDRDDFPVVLVGNKADLESQRQVPRSEASAFGASHHVAYFEASAKLRLNVDEAFEQLVRAVRKYQEQELPPSPPSAPRKKGGGCPCVLL.

Positions 1–30 are disordered; sequence MSSGAASGTGRGRPRGGGPGPGDPPPSETH. Residues 7–20 are compositionally biased toward gly residues; sequence SGTGRGRPRGGGPG. 36 to 44 contacts GTP; it reads GGGGVGKSA. Positions 58–66 match the Effector region motif; the sequence is YDPTIEDSY. Residues 83-87, 142-145, and 172-174 each bind GTP; these read DTAGQ, NKAD, and SAK. Cysteine methyl ester is present on Cys-215. Cys-215 carries the S-geranylgeranyl cysteine lipid modification. Positions 216-218 are cleaved as a propeptide — removed in mature form; sequence VLL.

This sequence belongs to the small GTPase superfamily. Ras family. As to quaternary structure, interacts with PLCE1. Interacts (active GTP-bound form preferentially) with RGS14. Interacts with OSBPL3. Interacts with ZDHHC19. Post-translationally, S-palmitoylated by ZDHHC19, leading to increased association with membranes and with rafts/caveolae as well as enhanced cell viability.

It is found in the cell membrane. It catalyses the reaction GTP + H2O = GDP + phosphate + H(+). In terms of biological role, GTP-binding protein with GTPase activity, likely involved in the regulation of MAPK signaling pathway and thereby controlling multiple cellular processes. Regulates the organization of the actin cytoskeleton. With OSPBL3, modulates integrin beta-1 (ITGB1) activity. This chain is Ras-related protein R-Ras (RRAS), found in Homo sapiens (Human).